Here is an 880-residue protein sequence, read N- to C-terminus: Potassium/sodium hyperpolarization-activated cyclic nucleotide-gated channel 1 (880 aa).

The tract at residues 1–80 (MEGGGKPNSS…SAGGLEDAEG (80 aa)) is disordered. Over 1-136 (MEGGGKPNSS…WIIHSYSDFR (136 aa)) the chain is Cytoplasmic. Low complexity predominate over residues 8–34 (NSSSNSRDDGNSVFPAKAPATGAGPAA). Over residues 62–71 (DGGGGGGEES) the composition is skewed to gly residues. Residues 137 to 158 (FYWDLIMLIMMVGNLVIIPVGI) form a helical membrane-spanning segment. Topologically, residues 159-167 (TFFTEQTTT) are extracellular. A helical transmembrane segment spans residues 168–188 (PWIIFNVASDTVFLLDLIMNF). Residues 189–209 (RTGTVNEDSSEIILDPKVIKM) lie on the Cytoplasmic side of the membrane. A helical transmembrane segment spans residues 210-230 (NYLKSWFVVDFISSIPVDYIF). Residues 231 to 254 (LIVEKGMDSEVYKTARALRIVRFT) are Extracellular-facing. The helical; Voltage-sensor transmembrane segment at 255-275 (KILSLLRLLRLSRLIRYIHQW) threads the bilayer. The Cytoplasmic segment spans residues 276 to 289 (EEIFHMTYDLASAV). The chain crosses the membrane as a helical span at residues 290–312 (VRIFNLIGMMLLLCHWDGCLQFL). The Extracellular segment spans residues 313–338 (VPLLQDFPPDCWVSLNEMVNDSWGKQ). N-linked (GlcNAc...) asparagine glycosylation is present at Asn332. The pore-forming intramembrane region spans 339-360 (YSYALFKAMSHMLCIGYGAQAP). A Selectivity filter motif is present at residues 352–356 (CIGYG). The Extracellular segment spans residues 361–365 (VSMSD). The chain crosses the membrane as a helical span at residues 366 to 386 (LWITMLSMIVGATCYAMFVGH). Over 387–880 (ATALIQSLDS…AEKPRFASNL (494 aa)) the chain is Cytoplasmic. 7 residues coordinate 3',5'-cyclic AMP: Gly533, Glu534, Cys536, Arg543, Thr544, Arg584, and Arg587. Polar residues predominate over residues 641–664 (LNSTSSTATPTSRMRTQSPPVYTA). 3 disordered regions span residues 641–686 (LNST…QPSA), 718–786 (ASQL…LPHE), and 835–880 (MSSG…ASNL). Low complexity-rich tracts occupy residues 665-685 (TSLS…PQPS) and 725-738 (PQQQ…QTQP). Polar residues predominate over residues 760 to 770 (STQALPNTSLT). Positions 844–855 (RGVPPAPPPPAA) are enriched in pro residues. Positions 870 to 880 (EAEKPRFASNL) are enriched in basic and acidic residues.

It belongs to the potassium channel HCN family. Homotetramer. Heterotetramer with HCN2. The potassium channel is composed of a homo- or heterotetrameric complex of pore-forming subunits. Interacts with KCNE2. Interacts with the SH3 domain of CSK. Detected in myocytes in heart sinoatrial node (SAN) and in brain, in particular in the granule cell layer and in Purkinje neuron bodies in the cerebellum.

Its subcellular location is the cell membrane. It catalyses the reaction Na(+)(in) = Na(+)(out). The catalysed reaction is K(+)(in) = K(+)(out). Its activity is regulated as follows. Activated by cAMP. cAMP binding promotes tetramerization and formation of an active channel. Compared to other family members, cAMP has less stimulatory effect on HCN1 because part of the molecules already contain bound cAMP and form homotetramers when cAMP levels are low, this inherent tetramerization in HCN1 results in a weaker response to increased cAMP. In terms of biological role, hyperpolarization-activated ion channel that are permeable to sodium and potassium ions. Exhibits weak selectivity for potassium over sodium ions. Contributes to the native pacemaker currents in heart (If) and in neurons (Ih). Participates in cerebellar mechanisms of motor learning. May mediate responses to sour stimuli. The sequence is that of Potassium/sodium hyperpolarization-activated cyclic nucleotide-gated channel 1 (HCN1) from Oryctolagus cuniculus (Rabbit).